A 405-amino-acid chain; its full sequence is MQYTEIMVRYGELSTKGKNRNDFIGRLNGNVTKALHEYKQLRIHPKRDRMHIILNGDDAEGVIERLRHVFGIQNFSPSIEVNRDLDSVKETALAMMKEIGKPGMTFKVNTRRSDHNFFLDTNDMNRELGGYLSDELPELEVQMKKPDITLRVEIRQDAIYLTNQVIQGAGGLPVGSAGKGMLMLSGGIDSPVAGYLTLKRGVDIEMVHFFSPPYTSDNALNKAKELTAKLVPYVGGIKFIEVPFTEIQEEVKHSVPEGYLMTIQRRMMLRLTDQIRAKRQGLAIFNGESVGQVASQTLESMMAINDVTTTPIVRPVATMDKNEIIEIAKDIDTYDLSIMPFEDCCTIFAPPAPKTRPNLDKTRFYEQRIDVDALIERSLVGVKVTEIKAGDQFLNQDEEIIAELL.

Residues 60-165 enclose the THUMP domain; it reads EGVIERLRHV…QDAIYLTNQV (106 aa). Residues 183 to 184, 208 to 209, R265, G287, and Q296 contribute to the ATP site; these read ML and HF.

Belongs to the ThiI family.

It localises to the cytoplasm. It catalyses the reaction [ThiI sulfur-carrier protein]-S-sulfanyl-L-cysteine + a uridine in tRNA + 2 reduced [2Fe-2S]-[ferredoxin] + ATP + H(+) = [ThiI sulfur-carrier protein]-L-cysteine + a 4-thiouridine in tRNA + 2 oxidized [2Fe-2S]-[ferredoxin] + AMP + diphosphate. The catalysed reaction is [ThiS sulfur-carrier protein]-C-terminal Gly-Gly-AMP + S-sulfanyl-L-cysteinyl-[cysteine desulfurase] + AH2 = [ThiS sulfur-carrier protein]-C-terminal-Gly-aminoethanethioate + L-cysteinyl-[cysteine desulfurase] + A + AMP + 2 H(+). The protein operates within cofactor biosynthesis; thiamine diphosphate biosynthesis. Its function is as follows. Catalyzes the ATP-dependent transfer of a sulfur to tRNA to produce 4-thiouridine in position 8 of tRNAs, which functions as a near-UV photosensor. Also catalyzes the transfer of sulfur to the sulfur carrier protein ThiS, forming ThiS-thiocarboxylate. This is a step in the synthesis of thiazole, in the thiamine biosynthesis pathway. The sulfur is donated as persulfide by IscS. This Latilactobacillus sakei subsp. sakei (strain 23K) (Lactobacillus sakei subsp. sakei) protein is Probable tRNA sulfurtransferase.